A 360-amino-acid chain; its full sequence is Phospho-N-acetylmuramoyl-pentapeptide-transferase (360 aa).

The next 10 membrane-spanning stretches (helical) occupy residues 27 to 47 (GATATALFFVFFFGPRIIAAL), 74 to 94 (TMGGLMILSGLIVSTLLWANL), 99 to 119 (VWVVLFVTTGFGLIGFYDDYL), 135 to 155 (LLLEVGIAGAACYAMMLLGTP), 165 to 185 (INGFAVDLGLFFLVVGPFVIV), 199 to 219 (GLAIVPVMIAAGTFGVIAYLA), 236 to 256 (AGELSVVTGAVIGAGLGFLWF), 263 to 283 (IFMGDTGSLALGGLLGAVAVA), 288 to 308 (IVLAIVGGLFVLETLSVIVQV), and 337 to 357 (QVVVRFWIIAFVLALIGLSTL).

The protein belongs to the glycosyltransferase 4 family. MraY subfamily. Mg(2+) is required as a cofactor.

The protein localises to the cell inner membrane. It carries out the reaction UDP-N-acetyl-alpha-D-muramoyl-L-alanyl-gamma-D-glutamyl-meso-2,6-diaminopimeloyl-D-alanyl-D-alanine + di-trans,octa-cis-undecaprenyl phosphate = di-trans,octa-cis-undecaprenyl diphospho-N-acetyl-alpha-D-muramoyl-L-alanyl-D-glutamyl-meso-2,6-diaminopimeloyl-D-alanyl-D-alanine + UMP. Its pathway is cell wall biogenesis; peptidoglycan biosynthesis. Its function is as follows. Catalyzes the initial step of the lipid cycle reactions in the biosynthesis of the cell wall peptidoglycan: transfers peptidoglycan precursor phospho-MurNAc-pentapeptide from UDP-MurNAc-pentapeptide onto the lipid carrier undecaprenyl phosphate, yielding undecaprenyl-pyrophosphoryl-MurNAc-pentapeptide, known as lipid I. The protein is Phospho-N-acetylmuramoyl-pentapeptide-transferase of Methylocella silvestris (strain DSM 15510 / CIP 108128 / LMG 27833 / NCIMB 13906 / BL2).